The chain runs to 109 residues: Large ribosomal subunit protein uL23 (109 aa).

Belongs to the universal ribosomal protein uL23 family. In terms of assembly, part of the 50S ribosomal subunit. Contacts protein L29, and trigger factor when it is bound to the ribosome.

Its function is as follows. One of the early assembly proteins it binds 23S rRNA. One of the proteins that surrounds the polypeptide exit tunnel on the outside of the ribosome. Forms the main docking site for trigger factor binding to the ribosome. The chain is Large ribosomal subunit protein uL23 from Prosthecochloris aestuarii (strain DSM 271 / SK 413).